We begin with the raw amino-acid sequence, 143 residues long: Large ribosomal subunit protein uL11 (143 aa).

The protein belongs to the universal ribosomal protein uL11 family. Part of the ribosomal stalk of the 50S ribosomal subunit. Interacts with L10 and the large rRNA to form the base of the stalk. L10 forms an elongated spine to which 2 L12 dimers bind in a sequential fashion forming a pentameric L10(L12)2(L12)2 complex. Post-translationally, one or more lysine residues are methylated.

Its function is as follows. Forms part of the ribosomal stalk which helps the ribosome interact with GTP-bound translation factors. The chain is Large ribosomal subunit protein uL11 from Agrobacterium fabrum (strain C58 / ATCC 33970) (Agrobacterium tumefaciens (strain C58)).